The chain runs to 194 residues: UPF0301 protein FTM_0963 (194 aa).

It belongs to the UPF0301 (AlgH) family.

This is UPF0301 protein FTM_0963 from Francisella tularensis subsp. mediasiatica (strain FSC147).